Reading from the N-terminus, the 510-residue chain is 2,3-bisphosphoglycerate-independent phosphoglycerate mutase (510 aa).

Aspartate 10 and serine 60 together coordinate Mn(2+). Residue serine 60 is the Phosphoserine intermediate of the active site. Residues histidine 121, 150 to 151 (RD), arginine 182, arginine 188, 252 to 255 (RPDR), and lysine 325 contribute to the substrate site. 5 residues coordinate Mn(2+): aspartate 392, histidine 396, aspartate 433, histidine 434, and histidine 451.

The protein belongs to the BPG-independent phosphoglycerate mutase family. Mn(2+) is required as a cofactor.

The protein localises to the plastid. Its subcellular location is the chloroplast. The enzyme catalyses (2R)-2-phosphoglycerate = (2R)-3-phosphoglycerate. It functions in the pathway carbohydrate degradation; glycolysis; pyruvate from D-glyceraldehyde 3-phosphate: step 3/5. Its function is as follows. Catalyzes the interconversion of 2-phosphoglycerate and 3-phosphoglycerate. The sequence is that of 2,3-bisphosphoglycerate-independent phosphoglycerate mutase from Gracilaria tenuistipitata var. liui (Red alga).